The chain runs to 1537 residues: Flocculation protein FLO1 (1537 aa).

The signal sequence occupies residues 1–24 (MTMPHRYMFLAVFTLLALTSVASG). Residues 74 to 249 (GGQTDISIDY…GTTVSDDFEG (176 aa)) enclose the PA14 domain. N-linked (GlcNAc...) asparagine glycosylation is found at N135 and N187. Positions 197–240 (GGSLPPNIEGTVYMYAGYYYPMKVVYSNAVSWGTLPISVTLPDG) are sugar recognition. The N-linked (GlcNAc...) asparagine glycan is linked to N262. 18 repeat units span residues 278–322 (TTTE…STII), 323–367 (TTTE…TTAI), 368–412 (TTTE…TTAM), 413–457 (TTTQ…TTAM), 458–502 (TTTQ…TTAM), 503–547 (TTTQ…TTAM), 548–592 (TTPQ…TTAI), 593–637 (TTTE…TTAI), 638–682 (TTTQ…TTAM), 683–727 (TTTQ…TTAM), 728–772 (TTTQ…GLIS), 773–817 (TTTE…GLVT), 818–862 (TTTE…GLIS), 863–907 (TTTE…GLIS), 908–952 (TTTE…GLIS), 953–997 (TTTE…GLIS), 998–1042 (TTTE…GLVT), and 1043–1087 (TTTE…ISSS). Positions 278–1087 (TTTEPWTGTF…KTPTTAISSS (810 aa)) are 18 X 45 AA approximate tandem repeats, Thr-rich. N-linked (GlcNAc...) asparagine glycosylation is found at N329, N374, N419, N464, N509, N554, N599, N644, N689, and N734. Disordered stretches follow at residues 770-799 (LIST…NGQP) and 860-889 (LIST…NGQP). Residues 773-795 (TTTEPWTGTFTSTSTEMTTVTGT) are compositionally biased toward low complexity. The span at 863 to 885 (TTTEPWTGTFTSTSTEMTTITGT) shows a compositional bias: low complexity. The interval 995 to 1024 (LISTTTEPWTGTFTSTSTEMTTVTGTNGQP) is disordered. Residues 998-1020 (TTTEPWTGTFTSTSTEMTTVTGT) show a composition bias toward low complexity. An N-linked (GlcNAc...) asparagine glycan is attached at N1114. Tandem repeats lie at residues 1118 to 1137 (VISS…TSSP) and 1138 to 1157 (VISS…IFSE). The segment at 1118 to 1157 (VISSSVISSSVTSSLFTSSPVISSSVISSSTTTSTSIFSE) is 2 X 20 AA approximate tandem repeats, Ser/Thr-rich. The span at 1161–1220 (SSVIPTSSSTSGSSESETSSAGSVSSSSFISSESSKSPTYSSSSLPLVTSATTSQETASS) shows a compositional bias: low complexity. A disordered region spans residues 1161-1232 (SSVIPTSSST…PATTTKTSEQ (72 aa)). A compositionally biased stretch (polar residues) spans 1222–1232 (PPATTTKTSEQ). 6 repeat units span residues 1226–1276 (TTKT…CPIS), 1291–1341 (TTET…CPIS), 1342–1392 (TTES…RPQT), 1408–1416 (ETTTNTLAA), 1417–1425 (ETTTNTVAA), and 1426–1434 (ETITNTGAA). The segment at 1226–1392 (TTKTSEQTTL…TVYPTWRPQT (167 aa)) is 3 X 51 AA approximate repeats, Ser/Thr-rich. Residues 1392–1404 (TANEESVSSKMNS) show a composition bias toward polar residues. Positions 1392–1414 (TANEESVSSKMNSATGETTTNTL) are disordered. A compositionally biased stretch (low complexity) spans 1405 to 1414 (ATGETTTNTL). Residues 1408 to 1434 (ETTTNTLAAETTTNTVAAETITNTGAA) form a 3 X 9 AA approximate tandem repeats, Thr-rich region. The disordered stretch occupies residues 1468–1497 (VSVSETGNTKSLTSSGLSTMSQQPRSTPAS). Residues 1472 to 1497 (ETGNTKSLTSSGLSTMSQQPRSTPAS) show a composition bias toward polar residues. G1514 carries GPI-anchor amidated glycine lipidation. Positions 1515–1537 (SANSLLAGSGLSVFIASLLLAII) are cleaved as a propeptide — removed in mature form.

It belongs to the flocculin family. Extensively N- and O-glycosylated. In terms of processing, the GPI-anchor is attached to the protein in the endoplasmic reticulum and serves to target the protein to the cell surface. There, the glucosamine-inositol phospholipid moiety is cleaved off and the GPI-modified mannoprotein is covalently attached via its lipidless GPI glycan remnant to the 1,6-beta-glucan of the outer cell wall layer.

The protein resides in the cell membrane. The protein localises to the secreted. It localises to the cell wall. Functionally, cell wall protein that participates directly in adhesive cell-cell interactions during yeast flocculation, a reversible, asexual and Ca(2+)-dependent process in which cells adhere to form aggregates (flocs) consisting of thousands of cells. The lectin-like protein sticks out of the cell wall of flocculent cells and selectively binds mannose residues in the cell walls of adjacent cells. Activity is inhibited by mannose, but not by glucose, maltose, sucrose or galactose. Also involved in cell-substrate adhesion. The polypeptide is Flocculation protein FLO1 (FLO1) (Saccharomyces cerevisiae (strain ATCC 204508 / S288c) (Baker's yeast)).